The chain runs to 87 residues: NADH dehydrogenase [ubiquinone] 1 alpha subcomplex subunit 4-like 2 (87 aa).

It belongs to the complex I NDUFA4 subunit family.

The protein is NADH dehydrogenase [ubiquinone] 1 alpha subcomplex subunit 4-like 2 (Ndufa4l2) of Mus musculus (Mouse).